The primary structure comprises 190 residues: Xanthine phosphoribosyltransferase (190 aa).

L20 and N27 together coordinate xanthine. 128–132 (ANGHA) is a binding site for 5-phospho-alpha-D-ribose 1-diphosphate. Residue K156 participates in xanthine binding.

It belongs to the purine/pyrimidine phosphoribosyltransferase family. Xpt subfamily. As to quaternary structure, homodimer.

Its subcellular location is the cytoplasm. It catalyses the reaction XMP + diphosphate = xanthine + 5-phospho-alpha-D-ribose 1-diphosphate. Its pathway is purine metabolism; XMP biosynthesis via salvage pathway; XMP from xanthine: step 1/1. Its function is as follows. Converts the preformed base xanthine, a product of nucleic acid breakdown, to xanthosine 5'-monophosphate (XMP), so it can be reused for RNA or DNA synthesis. This chain is Xanthine phosphoribosyltransferase, found in Pseudomonas aeruginosa (strain LESB58).